A 496-amino-acid polypeptide reads, in one-letter code: Cytochrome c-552 (496 aa).

Residues 1–23 form the signal peptide; it reads MKKYKFLFAISIIAIGLMTVLLA. Histidine 100 provides a ligand contact to heme c. Heme is bound by residues cysteine 128, cysteine 131, and lysine 132. Cysteine 166, cysteine 169, histidine 170, cysteine 210, cysteine 213, and histidine 214 together coordinate heme c. Ca(2+)-binding residues include glutamate 216, tyrosine 217, lysine 269, and glutamine 271. Residue tyrosine 217 participates in substrate binding. Histidine 272 lines the substrate pocket. Heme c-binding residues include histidine 283, cysteine 290, cysteine 293, histidine 294, histidine 308, cysteine 321, cysteine 324, histidine 325, and histidine 400.

The protein belongs to the cytochrome c-552 family. Ca(2+) serves as cofactor. It depends on heme c as a cofactor.

The protein resides in the periplasm. It catalyses the reaction 6 Fe(III)-[cytochrome c] + NH4(+) + 2 H2O = 6 Fe(II)-[cytochrome c] + nitrite + 8 H(+). It functions in the pathway nitrogen metabolism; nitrate reduction (assimilation). Its function is as follows. Catalyzes the reduction of nitrite to ammonia, consuming six electrons in the process. The protein is Cytochrome c-552 of Aliarcobacter butzleri (strain RM4018) (Arcobacter butzleri).